Consider the following 44-residue polypeptide: Antibacterial protein 3 homolog (44 aa).

It belongs to the staphylococcal hemolytic protein family.

It is found in the secreted. Functionally, has hemolytic activity and also inhibits the growth of gonococci. This chain is Antibacterial protein 3 homolog, found in Staphylococcus haemolyticus (strain JCSC1435).